A 168-amino-acid polypeptide reads, in one-letter code: Cilia- and flagella-associated protein HOATZ (168 aa).

The interval 142–168 (PKDKVPKSKEVLSESGLRDQEEVKALE) is disordered.

The protein belongs to the HOATZ family. As to expression, specifically expressed in tissues with motile cilia and flagella, such as brain ependyma, lung, testis, and oviduct but not in whole brain, liver,kidney, spleen, and eyeball.

The protein resides in the cytoplasm. The protein localises to the cell projection. It is found in the cilium. Its function is as follows. Required for motile ciliogenesis and flagellar genesis by mediating the maturation of the glycolytic enzyme ENO4. This is Cilia- and flagella-associated protein HOATZ from Mus musculus (Mouse).